A 307-amino-acid polypeptide reads, in one-letter code: 4-hydroxy-tetrahydrodipicolinate synthase (307 aa).

Ser57 is a binding site for pyruvate. Tyr145 serves as the catalytic Proton donor/acceptor. The active-site Schiff-base intermediate with substrate is the Lys173. Position 219 (Ile219) interacts with pyruvate.

Belongs to the DapA family. Homotetramer; dimer of dimers.

It localises to the cytoplasm. It carries out the reaction L-aspartate 4-semialdehyde + pyruvate = (2S,4S)-4-hydroxy-2,3,4,5-tetrahydrodipicolinate + H2O + H(+). The protein operates within amino-acid biosynthesis; L-lysine biosynthesis via DAP pathway; (S)-tetrahydrodipicolinate from L-aspartate: step 3/4. Catalyzes the condensation of (S)-aspartate-beta-semialdehyde [(S)-ASA] and pyruvate to 4-hydroxy-tetrahydrodipicolinate (HTPA). The protein is 4-hydroxy-tetrahydrodipicolinate synthase of Polynucleobacter asymbioticus (strain DSM 18221 / CIP 109841 / QLW-P1DMWA-1) (Polynucleobacter necessarius subsp. asymbioticus).